Here is a 1392-residue protein sequence, read N- to C-terminus: DNA-directed RNA polymerase subunit beta (1392 aa).

Positions L1372–E1392 are disordered.

It belongs to the RNA polymerase beta chain family. In terms of assembly, the RNAP catalytic core consists of 2 alpha, 1 beta, 1 beta' and 1 omega subunit. When a sigma factor is associated with the core the holoenzyme is formed, which can initiate transcription.

The catalysed reaction is RNA(n) + a ribonucleoside 5'-triphosphate = RNA(n+1) + diphosphate. DNA-dependent RNA polymerase catalyzes the transcription of DNA into RNA using the four ribonucleoside triphosphates as substrates. This is DNA-directed RNA polymerase subunit beta from Sphingopyxis alaskensis (strain DSM 13593 / LMG 18877 / RB2256) (Sphingomonas alaskensis).